Consider the following 335-residue polypeptide: Stearoyl-CoA desaturase 5 (335 aa).

The Cytoplasmic portion of the chain corresponds to 1 to 54; the sequence is MPGPAVDAEKVPFRSAKEEIRAGVGVEGSEGGGGGGGRERPGARGHRQDIVWRN. The interval 24 to 44 is disordered; it reads VGVEGSEGGGGGGGRERPGAR. Over residues 25–36 the composition is skewed to gly residues; that stretch reads GVEGSEGGGGGG. Asparagine 54 is a binding site for substrate. The helical transmembrane segment at 55–75 threads the bilayer; the sequence is VFLMSLLHLAAVYSLVLIPKA. Residues 76–77 lie on the Lumenal side of the membrane; the sequence is QP. The chain crosses the membrane as a helical span at residues 78–98; that stretch reads LTLLWAYFCFLLTALGVTAGA. Fe cation is bound by residues histidine 99 and histidine 104. Positions 99-104 match the Histidine box-1 motif; sequence HRLWSH. Over 99-198 the chain is Cytoplasmic; it reads HRLWSHRSYK…VVRFQRKYYK (100 aa). 3 residues coordinate substrate: asparagine 127, arginine 134, and aspartate 135. Fe cation-binding residues include histidine 136, histidine 139, and histidine 140. A Histidine box-2 motif is present at residues 136–140; sequence HRVHH. Positions 167 and 168 each coordinate substrate. Residues 199 to 219 form a helical membrane-spanning segment; that stretch reads ITVVLMCFVVPTLVPWYIWGE. Topologically, residues 220–227 are lumenal; it reads SLWNSYFL. A helical transmembrane segment spans residues 228 to 247; sequence ASILRYTISLNVTWLVNSVA. A substrate-binding site is contributed by tryptophan 241. Positions 248, 277, 280, and 281 each coordinate Fe cation. The Cytoplasmic portion of the chain corresponds to 248-335; the sequence is HMYGNRPYDK…RKARTGDGSA (88 aa). Residues 277 to 281 carry the Histidine box-3 motif; sequence HNYHH.

It belongs to the fatty acid desaturase type 1 family. May self-associate and form homodimers. Fe(2+) is required as a cofactor. Detected in brain.

The protein resides in the endoplasmic reticulum membrane. It catalyses the reaction octadecanoyl-CoA + 2 Fe(II)-[cytochrome b5] + O2 + 2 H(+) = (9Z)-octadecenoyl-CoA + 2 Fe(III)-[cytochrome b5] + 2 H2O. It carries out the reaction hexadecanoyl-CoA + 2 Fe(II)-[cytochrome b5] + O2 + 2 H(+) = (9Z)-hexadecenoyl-CoA + 2 Fe(III)-[cytochrome b5] + 2 H2O. Stearoyl-CoA desaturase that utilizes O(2) and electrons from reduced cytochrome b5 to introduce the first double bond into saturated fatty acyl-CoA substrates. Catalyzes the insertion of a cis double bond at the delta-9 position into fatty acyl-CoA substrates including palmitoyl-CoA and stearoyl-CoA. Gives rise to a mixture of 16:1 and 18:1 unsaturated fatty acids. Involved in neuronal cell proliferation and differentiation through down-regulation of EGFR/AKT/MAPK and Wnt signaling pathways. The polypeptide is Stearoyl-CoA desaturase 5 (SCD5) (Bos taurus (Bovine)).